The primary structure comprises 630 residues: 1-deoxy-D-xylulose-5-phosphate synthase (630 aa).

Thiamine diphosphate contacts are provided by residues histidine 80 and 121–123; that span reads GHS. Aspartate 152 provides a ligand contact to Mg(2+). Residues 153 to 154, asparagine 181, tyrosine 288, and glutamate 370 contribute to the thiamine diphosphate site; that span reads GA. Residue asparagine 181 coordinates Mg(2+).

This sequence belongs to the transketolase family. DXPS subfamily. In terms of assembly, homodimer. It depends on Mg(2+) as a cofactor. Thiamine diphosphate is required as a cofactor.

It catalyses the reaction D-glyceraldehyde 3-phosphate + pyruvate + H(+) = 1-deoxy-D-xylulose 5-phosphate + CO2. It functions in the pathway metabolic intermediate biosynthesis; 1-deoxy-D-xylulose 5-phosphate biosynthesis; 1-deoxy-D-xylulose 5-phosphate from D-glyceraldehyde 3-phosphate and pyruvate: step 1/1. Catalyzes the acyloin condensation reaction between C atoms 2 and 3 of pyruvate and glyceraldehyde 3-phosphate to yield 1-deoxy-D-xylulose-5-phosphate (DXP). The sequence is that of 1-deoxy-D-xylulose-5-phosphate synthase from Colwellia psychrerythraea (strain 34H / ATCC BAA-681) (Vibrio psychroerythus).